We begin with the raw amino-acid sequence, 365 residues long: Medium chain reductase pydE (365 aa).

One can recognise an Enoyl reductase (ER) domain in the interval 21–362 (KLIDSLPVPP…SKRARGKVLI (342 aa)). NADP(+) is bound by residues 185 to 188 (SGSV), tyrosine 226, 274 to 275 (IG), and 354 to 355 (KR).

This sequence belongs to the zinc-containing alcohol dehydrogenase family. As to quaternary structure, monomer.

The protein operates within mycotoxin biosynthesis. In terms of biological role, medium chain reductase; part of the gene cluster that mediates the biosynthesis of pyrrocidines, fungal natural products containing a macrocyclic para-cyclophane connected to a decahydrofluorene ring system that show potent antibiotic activities toward Gram-negative bacteria. Within the pathway, pydE functions synergistically with pydB, pydX and pydZ to form the cyclophane. The pathway begins with the PKS-NRPS pydA which, with the help of the trans-enoyl reductase pydC, synthesizes the polyketide-tyrosyl acyl thioester product which can be reductively off-loaded by the terminal reductase (R) domain in pydA. The alpha/beta hydrolase pydG is then required to catalyze the subsequent Knoevenagel condensation that affords the 3-pyrrolin-2-one ring, whereas the four proteins pydB, pydE, pydX and pydZ then function synergistically to form the cyclophane. PydB and the membrane-bound pydX and pydZ are lipid-binding proteins that can sequester and mold the pdyG product into the inverse S-shape. Binding of the medium chain reductase pydE to the complex would trigger the cascade oxidative cyclization. PydY is involved in the Diels-Alder cycloaddition that forms the decahydrofluorene core. Additional non-enzymatic hydroxylation yields pyrrocidine A2 which can be further reduced into pyrrocidine B by an endogenous reductase. The chain is Medium chain reductase pydE from Acremonium sp.